We begin with the raw amino-acid sequence, 451 residues long: MNLEVKKIDTANSHLSAKPSIEDLKKRYDKIAQKIAQKVKIDGFRRGKVPLSLVKTRYQAQIEQDAQEEMFQEILKNALKELGIESKDLIGSPNLTKFEKKDTHFEIEADIGLKPTIVLDKIKECVPSVEVEAVDEEKVNERLKQLAKDYAKFIDTDAQRKAQNDDKLTIDFEGFIDNVPFEGGKTQNFSLILGSKQMLEDFEKALLGMQAGEEKEFSLTFPSDYHAKHLAGKEALFKVKLHQIQAREVLEINDELAKIVLANEENAALELLKERVKGQLFLENKVRLYNEELKEKLIENLDEKILFDLPKTIIEQEMDLLFRNALYSMQAEEVKSLQENQEKAKEKRESFRNDATKSVKITFIIDALAKEEKIGVHDNEVFQTLYYEALMTGQNPENLIEQYRRNNMLAAVKMAMIEDRVLTYFLDKNLSKEQQEILEKMRPNAQKTQVS.

The PPIase FKBP-type domain occupies 165 to 250 (DDKLTIDFEG…LHQIQAREVL (86 aa)).

The protein belongs to the FKBP-type PPIase family. Tig subfamily.

It is found in the cytoplasm. It carries out the reaction [protein]-peptidylproline (omega=180) = [protein]-peptidylproline (omega=0). Its function is as follows. Involved in protein export. Acts as a chaperone by maintaining the newly synthesized protein in an open conformation. Functions as a peptidyl-prolyl cis-trans isomerase. The chain is Trigger factor from Helicobacter acinonychis (strain Sheeba).